A 568-amino-acid polypeptide reads, in one-letter code: MDQDAFFSERDPEAEGETPRKQESLSDVIGLLDVVLSYKPTEIGEDRSWLHSIIDNSKENKPSCKADDNNKDRAISTPTQDHRSSEESGISRRTGESKTETHARILDQQGIHRASRRGTSPNPLPENMGNERNTRIDEDSPNERRHQRSVPTDEDRKMAENSNKREEDQVEGFPEEVRRGTPLSDDREGRTNNNGRSMETSSTHSTRITDVITNPSPELEDAVLQRNKRRPTTIKRSQTRSERTQNSELHKSTSEDSSNLEDHNTKTSPKVLPSKNEESVATQKNNHNHRKTKYTTNNANNNTKSLPTPEHDTTANEEGTSNTSVDEMAKLLVSLGVIKSQHEFELSRSASHVFAKRMLKSANYKEMTFNLCGMLLSVEKSLENKVEENRTLLKQIQEEIDSSRDLHKRFSEYQKEQNSLMMANLSTLHIITDRGGKTGDPSDTTRSPSVFTKGKDNKVKKTRFDPSMEALGGQEFKPDLIREDELRDDIRNPVLEEHNNEPQASNASRLIPSTEKHTLHSLKLVIENSPLSRVEKKAYIKSLYKCRTNQEVKNVMELFEEDIDSLTN.

The segment at 1 to 25 (MDQDAFFSERDPEAEGETPRKQESL) is disordered. Over residues 7–24 (FSERDPEAEGETPRKQES) the composition is skewed to basic and acidic residues. The interval 33–41 (DVVLSYKPT) is N0 binding. The disordered stretch occupies residues 55–322 (DNSKENKPSC…TTANEEGTSN (268 aa)). Composition is skewed to basic and acidic residues over residues 56–105 (NSKE…HARI), 132–144 (RNTR…PNER), 151–167 (PTDE…KREE), and 175–190 (EEVR…REGR). The span at 191 to 216 (TNNNGRSMETSSTHSTRITDVITNPS) shows a compositional bias: polar residues. The segment covering 239-265 (TRSERTQNSELHKSTSEDSSNLEDHNT) has biased composition (basic and acidic residues). The span at 294–304 (YTTNNANNNTK) shows a compositional bias: low complexity. The segment at 344 to 411 (FELSRSASHV…SSRDLHKRFS (68 aa)) is multimerization. Positions 387–416 (EENRTLLKQIQEEIDSSRDLHKRFSEYQKE) form a coiled coil. The segment at 412–445 (EYQKEQNSLMMANLSTLHIITDRGGKTGDPSDTT) is l protein binding. Disordered regions lie at residues 434–455 (RGGK…TKGK) and 494–513 (VLEE…LIPS). A compositionally biased stretch (polar residues) spans 441–450 (PSDTTRSPSV). Positions 479-568 (DLIREDELRD…FEEDIDSLTN (90 aa)) are interaction with the nucleocapsid (N-RNA).

This sequence belongs to the respirovirus P protein family. In terms of assembly, homotetramer. Interacts (via multimerization domain) with polymerase L; this interaction forms the polymerase complex. Interacts (via N-terminus) with N0; this interaction allows P to chaperon N0 before encapsidation and form the N-P complex. Interacts (via C-terminus) with N-RNA template; this interaction positions the polymerase on the template.

Functionally, essential cofactor of the RNA polymerase L that plays a central role in the transcription and replication by forming the polymerase complex with RNA polymerase L and recruiting L to the genomic N-RNA template for RNA synthesis. Also plays a central role in the encapsidation of nascent RNA chains by forming the encapsidation complex with the nucleocapsid protein N (N-P complex). Acts as a chaperone for newly synthesized free N protein, so-called N0, allowing encapsidation of nascent RNA chains during replication. The nucleoprotein protein N prevents excessive phosphorylation of P, which leads to down-regulation of viral transcription/ replication. Participates, together with N, in the formation of viral factories (viroplasms), which are large inclusions in the host cytoplasm where replication takes place. Recruits host PI4KB and remodel the host endoplasmic reticulum membrane to form viral replication factories. The protein is Phosphoprotein (P/C) of Human parainfluenza 1 virus (strain CI-5/73) (HPIV-1).